A 1167-amino-acid polypeptide reads, in one-letter code: Melanoma receptor tyrosine-protein kinase (1167 aa).

Residues 1–25 form the signal peptide; sequence MEFLRGGAALLQLLLVLSISRCCST. At 26 to 642 the chain is on the extracellular side; sequence DPDRKVCQGT…GCRGDIVSHS (617 aa). N-linked (GlcNAc...) asparagine glycosylation is found at N114, N144, and N201. 11 disulfides stabilise this stretch: C195/C204, C199/C212, C220/C228, C224/C236, C237/C245, C241/C253, C256/C265, C269/C296, C300/C311, C315/C330, and C333/C337. 5 N-linked (GlcNAc...) asparagine glycosylation sites follow: N356, N365, N398, N417, and N501. Cystine bridges form between C504-C513, C508-C521, C524-C533, C537-C553, C556-C569, C560-C577, C593-C615, C618-C626, and C622-C634. Residue N576 is glycosylated (N-linked (GlcNAc...) asparagine). Residue N621 is glycosylated (N-linked (GlcNAc...) asparagine). The helical transmembrane segment at 643–665 threads the bilayer; that stretch reads SLAVGLVSGLLITVIVALLIVVL. Topologically, residues 666 to 1167 are cytoplasmic; it reads LRRRRIKRKR…QGGALYTPVR (502 aa). Positions 710 to 977 constitute a Protein kinase domain; sequence FKKDRVLGSG…QMARDPSRYL (268 aa). ATP contacts are provided by residues 716 to 724 and K743; that span reads LGSGAFGTV. D835 acts as the Proton acceptor in catalysis.

It belongs to the protein kinase superfamily. Tyr protein kinase family. EGF receptor subfamily.

Its subcellular location is the membrane. It catalyses the reaction L-tyrosyl-[protein] + ATP = O-phospho-L-tyrosyl-[protein] + ADP + H(+). Probable receptor with tyrosine-protein kinase activity. The chain is Melanoma receptor tyrosine-protein kinase (xmrk) from Xiphophorus maculatus (Southern platyfish).